Consider the following 604-residue polypeptide: DNA polymerase alpha subunit B (604 aa).

Residues 109-171 (ETLLNSYTTP…KYSSRSNRGE (63 aa)) form a disordered region. The span at 113–141 (NSYTTPSKGSQKRTITTPETPLTKRSVSA) shows a compositional bias: polar residues. A phosphothreonine mark is found at Thr129 and Thr132. A phosphoserine mark is found at Ser143, Ser149, Ser154, and Ser156. Low complexity predominate over residues 143 to 160 (SPHQLLSPSSFSPSATPP).

This sequence belongs to the DNA polymerase alpha subunit B family. In terms of assembly, component of the alpha DNA polymerase complex (also known as the alpha DNA polymerase-primase complex) consisting of four subunits: the catalytic subunit POLA1, the regulatory subunit POLA2, and the primase complex subunits PRIM1 and PRIM2 respectively. Within the complex, POLA1 directly interacts with PRIM2. Phosphorylated in a cell cycle-dependent manner, in G2/M phase.

It localises to the nucleus. Its function is as follows. Accessory subunit of the DNA polymerase alpha complex (also known as the alpha DNA polymerase-primase complex) which plays an essential role in the initiation of DNA synthesis. During the S phase of the cell cycle, the DNA polymerase alpha complex (composed of a catalytic subunit POLA1, an accessory subunit POLA2 and two primase subunits, the catalytic subunit PRIM1 and the regulatory subunit PRIM2) is recruited to DNA at the replicative forks via direct interactions with MCM10 and WDHD1. The primase subunit of the polymerase alpha complex initiates DNA synthesis by oligomerising short RNA primers on both leading and lagging strands. These primers are initially extended by the polymerase alpha catalytic subunit and subsequently transferred to polymerase delta and polymerase epsilon for processive synthesis on the lagging and leading strand, respectively. This is DNA polymerase alpha subunit B (POLA2) from Bos taurus (Bovine).